Reading from the N-terminus, the 237-residue chain is Large ribosomal subunit protein uL1 (237 aa).

The protein belongs to the universal ribosomal protein uL1 family. Part of the 50S ribosomal subunit.

In terms of biological role, binds directly to 23S rRNA. The L1 stalk is quite mobile in the ribosome, and is involved in E site tRNA release. Protein L1 is also a translational repressor protein, it controls the translation of the L11 operon by binding to its mRNA. The polypeptide is Large ribosomal subunit protein uL1 (Dehalococcoides mccartyi (strain ATCC BAA-2266 / KCTC 15142 / 195) (Dehalococcoides ethenogenes (strain 195))).